The primary structure comprises 156 residues: 6,7-dimethyl-8-ribityllumazine synthase (156 aa).

5-amino-6-(D-ribitylamino)uracil contacts are provided by residues Phe23, 57–59 (AFE), and 81–83 (AVI). Residue 86-87 (ST) participates in (2S)-2-hydroxy-3-oxobutyl phosphate binding. The active-site Proton donor is His89. Phe114 serves as a coordination point for 5-amino-6-(D-ribitylamino)uracil. Arg128 contacts (2S)-2-hydroxy-3-oxobutyl phosphate.

It belongs to the DMRL synthase family.

It carries out the reaction (2S)-2-hydroxy-3-oxobutyl phosphate + 5-amino-6-(D-ribitylamino)uracil = 6,7-dimethyl-8-(1-D-ribityl)lumazine + phosphate + 2 H2O + H(+). The protein operates within cofactor biosynthesis; riboflavin biosynthesis; riboflavin from 2-hydroxy-3-oxobutyl phosphate and 5-amino-6-(D-ribitylamino)uracil: step 1/2. In terms of biological role, catalyzes the formation of 6,7-dimethyl-8-ribityllumazine by condensation of 5-amino-6-(D-ribitylamino)uracil with 3,4-dihydroxy-2-butanone 4-phosphate. This is the penultimate step in the biosynthesis of riboflavin. The sequence is that of 6,7-dimethyl-8-ribityllumazine synthase from Campylobacter fetus subsp. fetus (strain 82-40).